Here is a 394-residue protein sequence, read N- to C-terminus: Probable fimbrial assembly protein FimD, serogroup H1 (394 aa).

The protein is Probable fimbrial assembly protein FimD, serogroup H1 (fimD) of Dichelobacter nodosus (Bacteroides nodosus).